The sequence spans 153 residues: Transcriptional repressor NrdR (153 aa).

The segment at 3-34 (CPYCNADDTKVIDSRLAAEGAQVRRRRQCNQC) is a zinc-finger region. One can recognise an ATP-cone domain in the interval 49 to 139 (PRIIKSNGRI…VYRDFQDIEA (91 aa)).

Belongs to the NrdR family. The cofactor is Zn(2+).

Negatively regulates transcription of bacterial ribonucleotide reductase nrd genes and operons by binding to NrdR-boxes. The protein is Transcriptional repressor NrdR of Psychrobacter sp. (strain PRwf-1).